The primary structure comprises 209 residues: Large ribosomal subunit protein uL3 (209 aa).

The disordered stretch occupies residues 133-153 (THGNSLSHRAPGSIGQNQTPG). Gln-150 is subject to N5-methylglutamine.

Belongs to the universal ribosomal protein uL3 family. In terms of assembly, part of the 50S ribosomal subunit. Forms a cluster with proteins L14 and L19. In terms of processing, methylated by PrmB.

One of the primary rRNA binding proteins, it binds directly near the 3'-end of the 23S rRNA, where it nucleates assembly of the 50S subunit. This chain is Large ribosomal subunit protein uL3, found in Pectobacterium atrosepticum (strain SCRI 1043 / ATCC BAA-672) (Erwinia carotovora subsp. atroseptica).